The primary structure comprises 327 residues: Olfactory receptor 51T1 (327 aa).

The Extracellular portion of the chain corresponds to 1–27 (MAIFNNTTSSSSNFLLTAFPGLECAHV). N-linked (GlcNAc...) asparagine glycosylation is found at asparagine 5 and asparagine 6. The helical transmembrane segment at 28-48 (WISIPVCCLYTIALLGNSMIF) threads the bilayer. The Cytoplasmic segment spans residues 49-56 (LVIITKRR). A helical transmembrane segment spans residues 57-77 (LHKPMYYFLSMLAAVDLCLTI). The Extracellular portion of the chain corresponds to 78–101 (TTLPTVLGVLWFHAREISFKACFI). Residues 102–122 (QMFFVHAFSLLESSVLVAMAF) form a helical membrane-spanning segment. Topologically, residues 123–141 (DRFVAICNPLNYATILTDR) are cytoplasmic. The helical transmembrane segment at 142–162 (MVLVIGLVICIRPAVFLLPLL) threads the bilayer. Residues 163 to 198 (VAINTVSFHGGHELSHPFCYHPEVIKYTYSKPWISS) lie on the Extracellular side of the membrane. The helical transmembrane segment at 199–219 (FWGLFLQLYLNGTDVLFILFS) threads the bilayer. Over 220–239 (YVLILRTVLGIVARKKQQKA) the chain is Cytoplasmic. Residues 240–260 (LSTCVCHICAVTIFYVPLISL) form a helical membrane-spanning segment. At 261-275 (SLAHRLFHSTPRVLC) the chain is on the extracellular side. A helical membrane pass occupies residues 276 to 296 (STLANIYLLLPPVLNPIIYSL). Over 297 to 327 (KTKTIRQAMFQLLQSKGSWGFNVRGLRGRWD) the chain is Cytoplasmic.

The protein belongs to the G-protein coupled receptor 1 family.

It localises to the cell membrane. Functionally, odorant receptor. This is Olfactory receptor 51T1 (OR51T1) from Homo sapiens (Human).